Here is a 185-residue protein sequence, read N- to C-terminus: Bcl-2-modifying factor (185 aa).

The tract at residues 1-28 (MEPPQCVEELEDDVFQPEDGEPGTQPGS) is disordered. Acidic residues predominate over residues 8-21 (EELEDDVFQPEDGE). The tract at residues 67 to 75 (DKATQTLSP) is interaction with DLC2. The BH3 motif lies at 134-148 (IARKLQCIADQFHRL).

This sequence belongs to the Bcl-2 family. Interacts with MCL1, BCL2, BCL2L1/BCL-Xl, BCL2A1 and BCL2L2/BCL-w. Interacts with the myosin V actin motor complex through its binding to DLC2.

Functionally, may play a role in apoptosis. The protein is Bcl-2-modifying factor (Bmf) of Rattus norvegicus (Rat).